The chain runs to 408 residues: Histidine--tRNA ligase (408 aa).

It belongs to the class-II aminoacyl-tRNA synthetase family. Homodimer.

Its subcellular location is the cytoplasm. It carries out the reaction tRNA(His) + L-histidine + ATP = L-histidyl-tRNA(His) + AMP + diphosphate + H(+). This is Histidine--tRNA ligase from Campylobacter jejuni subsp. jejuni serotype O:23/36 (strain 81-176).